The sequence spans 239 residues: Uridylate kinase (239 aa).

ATP is bound at residue 13–16; that stretch reads KVSG. Gly-55 contacts UMP. The ATP site is built by Gly-56 and Arg-60. Residues Asp-75 and 136–143 each bind UMP; that span reads TGNPFCTT. ATP contacts are provided by Thr-163, Gln-164, Tyr-169, and Asp-172.

Belongs to the UMP kinase family. As to quaternary structure, homohexamer.

It localises to the cytoplasm. The enzyme catalyses UMP + ATP = UDP + ADP. Its pathway is pyrimidine metabolism; CTP biosynthesis via de novo pathway; UDP from UMP (UMPK route): step 1/1. Inhibited by UTP. Catalyzes the reversible phosphorylation of UMP to UDP. The protein is Uridylate kinase of Rickettsia bellii (strain RML369-C).